A 1737-amino-acid chain; its full sequence is Intraflagellar transport protein osm-1 (1737 aa).

WD repeat units follow at residues Asp14–Phe53, Gly63–Lys103, Val110–Lys150, Thr151–Ile189, Thr191–Asp229, Gln233–Gly273, and Asp511–Thr553. TPR repeat units follow at residues Asn700–Tyr737, Ser803–Ile836, Val848–Val881, Thr907–Ile940, His979–Leu1012, Arg1037–Tyr1070, and Gly1137–Val1170.

It belongs to the IFT172 family. As to quaternary structure, component of the IFT complex B composed of at least che-2, che-13, dyf-1, dyf-3, dyf-6, dyf-11, dyf-13, ift-20, ift-74, ift-81, ifta-2, osm-1, osm-5 and osm-6. As to expression, expressed in amphid and phasmid chemosensory neurons, where it appears to concentrate at the base of the transition zones, which correspond to the basal bodies of motile and sensory cilia. Moves in the retrograde direction along cilia and dendrites, suggesting that it is retrieved from the distal endings of the cilia by a retrograde transport pathway that moves it along cilia and then dendrites, back to the neuronal cell body.

It is found in the cell projection. Its subcellular location is the cilium. Functionally, component of the intraflagellar transport (IFT) complex B required for transport of proteins in the motile cilium. May be required for ciliary entrance and transport of specific ciliary cargo proteins such as che-3 which are related to motility. Required for the maintenance and formation of chemosensory cilia that detect chemosensory cues. This is Intraflagellar transport protein osm-1 from Caenorhabditis elegans.